A 182-amino-acid chain; its full sequence is IQ domain-containing protein F1 (182 aa).

2 stretches are compositionally biased toward basic and acidic residues: residues 1-10 (MGEEQQKPEE) and 31-43 (ETEK…KQEL). Residues 1 to 43 (MGEEQQKPEELNAPTDDAPQEKQQPADLSSETEKAKSKKKQEL) are disordered. 2 consecutive IQ domains span residues 45–74 (EKDQ…SAWI) and 101–130 (EQWA…AVRT).

As to quaternary structure, interacts with calmodulin. Specifically expressed in testes and mature spermatozoa (at protein level).

Its subcellular location is the cytoplasmic vesicle. It is found in the secretory vesicle. The protein resides in the acrosome. Functionally, involved in sperm capacitation and acrosome reaction. The polypeptide is IQ domain-containing protein F1 (Mus musculus (Mouse)).